Here is a 341-residue protein sequence, read N- to C-terminus: Anthranilate phosphoribosyltransferase (341 aa).

5-phospho-alpha-D-ribose 1-diphosphate-binding positions include Gly82, 85–86 (GD), Thr90, 92–95 (NIST), 110–118 (KHGGRSVSS), and Ser122. Residue Gly82 participates in anthranilate binding. Ser94 lines the Mg(2+) pocket. Arg168 serves as a coordination point for anthranilate. Mg(2+)-binding residues include Asp227 and Glu228.

It belongs to the anthranilate phosphoribosyltransferase family. In terms of assembly, homodimer. Mg(2+) is required as a cofactor.

The catalysed reaction is N-(5-phospho-beta-D-ribosyl)anthranilate + diphosphate = 5-phospho-alpha-D-ribose 1-diphosphate + anthranilate. The protein operates within amino-acid biosynthesis; L-tryptophan biosynthesis; L-tryptophan from chorismate: step 2/5. Its function is as follows. Catalyzes the transfer of the phosphoribosyl group of 5-phosphorylribose-1-pyrophosphate (PRPP) to anthranilate to yield N-(5'-phosphoribosyl)-anthranilate (PRA). This chain is Anthranilate phosphoribosyltransferase, found in Nitrosomonas eutropha (strain DSM 101675 / C91 / Nm57).